We begin with the raw amino-acid sequence, 667 residues long: METSESSTSDYRQTEGEGEGVPGTLSTAVCEHLRKLCLREFPCGIGSWNKSRFLPQKCRVWRELVPKEEETLVPEEETVEALLGLVRSNHSPWAMLKDASAEDRFLRELAIQNPLMIKDTFFYSYFRSLRVVNKGVSLVDKDLLKFLKLEELVLSANKIEEIDANNLPPTLKVLELYGNLIASMECLCSAPPPRLQHLGLGHNKLLGPLESLYVTSHNWPQLVSLDLGFNNLTDLQNMILGLSTLRHLRLLVLQGNPLSLVPYYRGFTIDSLAHLCVLDDITVSPNEKHQFRGLNIHGDLLAREAQFVVTIGNVRGVLDSSILDPEPGPDGPFISYSYYVTYDFVEDEDMERNVSGLVEATHHDSVLDEIDKHFSGTDEEDQQEDPLDGRHRHRGRQRFHPGSTEEMSKELSEFIAKEMSQMAEGSVESGITEVDWSETSISIHSAPLPQSIDSSEELAKLRPKIDIQLCPSPGTVLFNTVHKPWSDVIPCTYEMKHTLKELIRVKAFLLAGTTVSIVEEKILSWPVVPTPVESPLPAKKGKDNNKKKEPAKDKVHKKKKEPPRELRQDPPVLTVLGSGLVYLEPLLAGEAVVSTVCNFGVVRTLETDRLTHARDSKKVKKSLKKDRSKTVPPTMESGYQPEPLSVEVQIQLHQYRSVEEAFLSLID.

Positions 1–11 (METSESSTSDY) are enriched in polar residues. Residues 1 to 24 (METSESSTSDYRQTEGEGEGVPGT) are disordered. 4 LRR repeats span residues 148 to 169 (KLEE…NLPP), 170 to 191 (TLKV…CSAP), 194 to 213 (RLQH…ESLY), and 221 to 242 (QLVS…ILGL). The 39-residue stretch at 256-294 (NPLSLVPYYRGFTIDSLAHLCVLDDITVSPNEKHQFRGL) folds into the LRRCT domain. 3 disordered regions span residues 374–407 (FSGT…TEEM), 533–570 (ESPL…RQDP), and 616–640 (SKKV…SGYQ). Over residues 377 to 386 (TDEEDQQEDP) the composition is skewed to acidic residues. Residues 390-399 (RHRHRGRQRF) show a composition bias toward basic residues. Residues 540–553 (KGKDNNKKKEPAKD) are compositionally biased toward basic and acidic residues. Residues 617–627 (KKVKKSLKKDR) are compositionally biased toward basic residues.

In Mus musculus (Mouse), this protein is Leucine-rich repeat-containing protein 43 (Lrrc43).